A 160-amino-acid polypeptide reads, in one-letter code: SsrA-binding protein (160 aa).

Residues 134-160 form a disordered region; the sequence is YDKRDTERERDSNRELHRAVRNKGKED.

This sequence belongs to the SmpB family.

The protein resides in the cytoplasm. Its function is as follows. Required for rescue of stalled ribosomes mediated by trans-translation. Binds to transfer-messenger RNA (tmRNA), required for stable association of tmRNA with ribosomes. tmRNA and SmpB together mimic tRNA shape, replacing the anticodon stem-loop with SmpB. tmRNA is encoded by the ssrA gene; the 2 termini fold to resemble tRNA(Ala) and it encodes a 'tag peptide', a short internal open reading frame. During trans-translation Ala-aminoacylated tmRNA acts like a tRNA, entering the A-site of stalled ribosomes, displacing the stalled mRNA. The ribosome then switches to translate the ORF on the tmRNA; the nascent peptide is terminated with the 'tag peptide' encoded by the tmRNA and targeted for degradation. The ribosome is freed to recommence translation, which seems to be the essential function of trans-translation. The sequence is that of SsrA-binding protein from Pseudomonas fluorescens (strain SBW25).